We begin with the raw amino-acid sequence, 307 residues long: Zinc-alpha-2-glycoprotein (307 aa).

The N-terminal stretch at 1 to 17 (MVPVLLSLPLLLGPAVF) is a signal peptide. Residue Gln-18 is modified to Pyrrolidone carboxylic acid. An intrachain disulfide couples Cys-118 to Cys-181. Residues Asn-123, Asn-190, and Asn-254 are each glycosylated (N-linked (GlcNAc...) asparagine). The 86-residue stretch at 202–287 (PTVTITSRVI…DHRGFSQSLS (86 aa)) folds into the Ig-like C1-type domain. A disulfide bond links Cys-220 and Cys-275.

This sequence belongs to the MHC class I family. Interacts with PIP.

The protein resides in the secreted. Functionally, stimulates lipid degradation in adipocytes and causes the extensive fat losses associated with some advanced cancers. The sequence is that of Zinc-alpha-2-glycoprotein (Azgp1) from Mus musculus (Mouse).